The primary structure comprises 326 residues: Glyoxalase I (326 aa).

2 consecutive VOC domains span residues Leu-22–Tyr-167 and Lys-182–His-322. His-25 provides a ligand contact to Zn(2+). Arg-29 contributes to the substrate binding site. Residue Glu-89 participates in Zn(2+) binding. Residues Asn-93, Arg-113, His-117, and Arg-147–Gln-148 each bind substrate. His-117 is a Zn(2+) binding site. Glu-163 serves as a coordination point for Zn(2+). Residues Glu-163 and Glu-318 each act as proton donor/acceptor in the active site.

It belongs to the glyoxalase I family. As to quaternary structure, monomer. The cofactor is Zn(2+).

The enzyme catalyses (R)-S-lactoylglutathione = methylglyoxal + glutathione. It functions in the pathway secondary metabolite metabolism; methylglyoxal degradation; (R)-lactate from methylglyoxal: step 1/2. Catalyzes the conversion of hemimercaptal, formed from methylglyoxal and glutathione, to S-lactoylglutathione. Can use gamma-glutamylcysteine as a substrate. This Saccharomyces cerevisiae (strain ATCC 204508 / S288c) (Baker's yeast) protein is Glyoxalase I.